An 80-amino-acid polypeptide reads, in one-letter code: Large ribosomal subunit protein bL31 (80 aa).

4 residues coordinate Zn(2+): Cys-16, Cys-18, Cys-36, and Cys-39.

The protein belongs to the bacterial ribosomal protein bL31 family. Type A subfamily. Part of the 50S ribosomal subunit. Zn(2+) serves as cofactor.

Its function is as follows. Binds the 23S rRNA. The sequence is that of Large ribosomal subunit protein bL31 from Methylacidiphilum infernorum (isolate V4) (Methylokorus infernorum (strain V4)).